The sequence spans 253 residues: Triosephosphate isomerase (253 aa).

Position 9–11 (9–11) interacts with substrate; that stretch reads NWK. His97 functions as the Electrophile in the catalytic mechanism. Glu169 functions as the Proton acceptor in the catalytic mechanism. Substrate is bound by residues Gly175, Ser215, and 236 to 237; that span reads GG.

This sequence belongs to the triosephosphate isomerase family. Homodimer.

Its subcellular location is the cytoplasm. It catalyses the reaction D-glyceraldehyde 3-phosphate = dihydroxyacetone phosphate. Its pathway is carbohydrate biosynthesis; gluconeogenesis. The protein operates within carbohydrate degradation; glycolysis; D-glyceraldehyde 3-phosphate from glycerone phosphate: step 1/1. Functionally, involved in the gluconeogenesis. Catalyzes stereospecifically the conversion of dihydroxyacetone phosphate (DHAP) to D-glyceraldehyde-3-phosphate (G3P). The chain is Triosephosphate isomerase from Staphylococcus saprophyticus subsp. saprophyticus (strain ATCC 15305 / DSM 20229 / NCIMB 8711 / NCTC 7292 / S-41).